Consider the following 493-residue polypeptide: Glutamyl-tRNA(Gln) amidotransferase subunit A (493 aa).

Active-site charge relay system residues include Lys78 and Ser158. Ser182 (acyl-ester intermediate) is an active-site residue.

It belongs to the amidase family. GatA subfamily. As to quaternary structure, heterotrimer of A, B and C subunits.

It catalyses the reaction L-glutamyl-tRNA(Gln) + L-glutamine + ATP + H2O = L-glutaminyl-tRNA(Gln) + L-glutamate + ADP + phosphate + H(+). Its function is as follows. Allows the formation of correctly charged Gln-tRNA(Gln) through the transamidation of misacylated Glu-tRNA(Gln) in organisms which lack glutaminyl-tRNA synthetase. The reaction takes place in the presence of glutamine and ATP through an activated gamma-phospho-Glu-tRNA(Gln). The sequence is that of Glutamyl-tRNA(Gln) amidotransferase subunit A from Methylocella silvestris (strain DSM 15510 / CIP 108128 / LMG 27833 / NCIMB 13906 / BL2).